A 556-amino-acid chain; its full sequence is Arginine--tRNA ligase (556 aa).

The 'HIGH' region signature appears at 132–142 (ANPTGDLHLGH).

It belongs to the class-I aminoacyl-tRNA synthetase family. In terms of assembly, monomer.

It localises to the cytoplasm. It carries out the reaction tRNA(Arg) + L-arginine + ATP = L-arginyl-tRNA(Arg) + AMP + diphosphate. The polypeptide is Arginine--tRNA ligase (Shouchella clausii (strain KSM-K16) (Alkalihalobacillus clausii)).